Reading from the N-terminus, the 552-residue chain is Dihydroxy-acid dehydratase (552 aa).

Cys46 lines the [2Fe-2S] cluster pocket. Asp78 is a binding site for Mg(2+). Cys119 provides a ligand contact to [2Fe-2S] cluster. Positions 120 and 121 each coordinate Mg(2+). Lys121 is subject to N6-carboxylysine. Cys191 provides a ligand contact to [2Fe-2S] cluster. Position 442 (Glu442) interacts with Mg(2+). Ser468 acts as the Proton acceptor in catalysis.

Belongs to the IlvD/Edd family. As to quaternary structure, homodimer. The cofactor is [2Fe-2S] cluster. It depends on Mg(2+) as a cofactor.

The catalysed reaction is (2R)-2,3-dihydroxy-3-methylbutanoate = 3-methyl-2-oxobutanoate + H2O. It carries out the reaction (2R,3R)-2,3-dihydroxy-3-methylpentanoate = (S)-3-methyl-2-oxopentanoate + H2O. It participates in amino-acid biosynthesis; L-isoleucine biosynthesis; L-isoleucine from 2-oxobutanoate: step 3/4. It functions in the pathway amino-acid biosynthesis; L-valine biosynthesis; L-valine from pyruvate: step 3/4. Its function is as follows. Functions in the biosynthesis of branched-chain amino acids. Catalyzes the dehydration of (2R,3R)-2,3-dihydroxy-3-methylpentanoate (2,3-dihydroxy-3-methylvalerate) into 2-oxo-3-methylpentanoate (2-oxo-3-methylvalerate) and of (2R)-2,3-dihydroxy-3-methylbutanoate (2,3-dihydroxyisovalerate) into 2-oxo-3-methylbutanoate (2-oxoisovalerate), the penultimate precursor to L-isoleucine and L-valine, respectively. The sequence is that of Dihydroxy-acid dehydratase from Picrophilus torridus (strain ATCC 700027 / DSM 9790 / JCM 10055 / NBRC 100828 / KAW 2/3).